Consider the following 458-residue polypeptide: MLLILPEITLTLIALLGQCFALMIPNKNKIIYNIVILLCIISIFLTFKYSSYEGIWHSFATGINIGISKSIVLLFTIVSLIIYRDYSNLIGEAIKFEFITLILLSIVGIFVAISSRNFLLLFCGMELTALTSYALAGFKLDDIQSSEGALKYFILGSLVTCLSLFGISFIYGFGGSIQFEDILHQLNNNSEIKPGLIIGIVLFLSSIFFKLASSPLHFWIPDVYEGSPISSITYFTSAAKIGMVIVLFNISKLIIGNYYPINYNLIKIIAILSMLFGAFGAIQQTSLKRLMAYSTILNIGYVLIGVILPNQEGYKAALLYILIYAVVSIGFFTCLIMLFGKDVDKASFKTIQGIAETHKTIAALISIVMFSMIGIPPLTGFFGKYYLFYQAINKQEFTLAYCGIFTSVVAAFYYLKVVKAMYFSKKNSIIKLPIQYGLLLINYLVLVFLLFGSFIILF.

The next 14 membrane-spanning stretches (helical) occupy residues 2 to 22 (LLILPEITLTLIALLGQCFAL), 30 to 50 (IIYNIVILLCIISIFLTFKYS), 62 to 82 (GINIGISKSIVLLFTIVSLII), 93 to 113 (AIKFEFITLILLSIVGIFVAI), 118 to 138 (FLLLFCGMELTALTSYALAGF), 153 to 173 (FILGSLVTCLSLFGISFIYGF), 196 to 216 (LIIGIVLFLSSIFFKLASSPL), 235 to 255 (FTSAAKIGMVIVLFNISKLII), 261 to 281 (INYNLIKIIAILSMLFGAFGA), 290 to 310 (LMAYSTILNIGYVLIGVILPN), 319 to 339 (LYILIYAVVSIGFFTCLIMLF), 361 to 381 (IAALISIVMFSMIGIPPLTGF), 397 to 417 (FTLAYCGIFTSVVAAFYYLKV), and 438 to 458 (LLLINYLVLVFLLFGSFIILF).

It belongs to the complex I subunit 2 family. As to quaternary structure, NDH-1 is composed of 14 different subunits. Subunits NuoA, H, J, K, L, M, N constitute the membrane sector of the complex.

It localises to the cell inner membrane. The catalysed reaction is a quinone + NADH + 5 H(+)(in) = a quinol + NAD(+) + 4 H(+)(out). NDH-1 shuttles electrons from NADH, via FMN and iron-sulfur (Fe-S) centers, to quinones in the respiratory chain. The immediate electron acceptor for the enzyme in this species is believed to be ubiquinone. Couples the redox reaction to proton translocation (for every two electrons transferred, four hydrogen ions are translocated across the cytoplasmic membrane), and thus conserves the redox energy in a proton gradient. The polypeptide is NADH-quinone oxidoreductase subunit N (Rickettsia typhi (strain ATCC VR-144 / Wilmington)).